A 465-amino-acid chain; its full sequence is Sensor histidine kinase ZraS (465 aa).

Topologically, residues 1 to 14 (MSFIRLHKDAAAMW) are cytoplasmic. Residues 15-35 (LSRLLPAAIFILVGLFSIMVI) traverse the membrane as a helical segment. Residues 36–203 (RDYGRESAAA…ATQAREWRNT (168 aa)) lie on the Periplasmic side of the membrane. Residues 204–224 (LIVLSALAAVLLATLLAFFWY) form a helical membrane-spanning segment. Residues 225-465 (QRYQRSHREL…WLPVIARQQD (241 aa)) are Cytoplasmic-facing. Residues 253-461 (GVAHEIRNPL…VFTIWLPVIA (209 aa)) enclose the Histidine kinase domain. His-256 carries the post-translational modification Phosphohistidine; by autocatalysis.

Post-translationally, autophosphorylated.

It is found in the cell inner membrane. The catalysed reaction is ATP + protein L-histidine = ADP + protein N-phospho-L-histidine.. With respect to regulation, activity of the ZraS/ZraR two-component system is repressed by the zinc-bound form of ZraP, which probably interacts with the periplasmic region of ZraS. Functionally, part of the Zra signaling pathway, an envelope stress response (ESR) system composed of the periplasmic accessory protein ZraP, the histidine kinase ZraS and the transcriptional regulator ZraR. The ZraPSR system contributes to antibiotic resistance and is important for membrane integrity in the presence of membrane-targeting biocides. ZraS is a member of the two-component regulatory system ZraS/ZraR. Functions as a membrane-associated sensor kinase that phosphorylates ZraR in response to high concentrations of Zn(2+) or Pb(2+) in the medium. The sequence is that of Sensor histidine kinase ZraS (zraS) from Salmonella typhi.